The primary structure comprises 499 residues: Glycerol kinase (499 aa).

Threonine 12 is a binding site for ADP. Residues threonine 12, threonine 13, and serine 14 each coordinate ATP. Threonine 12 contacts sn-glycerol 3-phosphate. Arginine 16 is a binding site for ADP. Sn-glycerol 3-phosphate is bound by residues arginine 82, glutamate 83, tyrosine 134, and aspartate 240. The glycerol site is built by arginine 82, glutamate 83, tyrosine 134, aspartate 240, and glutamine 241. ADP-binding residues include threonine 262 and glycine 306. Residues threonine 262, glycine 306, glutamine 310, and glycine 412 each coordinate ATP. 2 residues coordinate ADP: glycine 412 and asparagine 416.

It belongs to the FGGY kinase family.

The enzyme catalyses glycerol + ATP = sn-glycerol 3-phosphate + ADP + H(+). It functions in the pathway polyol metabolism; glycerol degradation via glycerol kinase pathway; sn-glycerol 3-phosphate from glycerol: step 1/1. Its activity is regulated as follows. Inhibited by fructose 1,6-bisphosphate (FBP). Key enzyme in the regulation of glycerol uptake and metabolism. Catalyzes the phosphorylation of glycerol to yield sn-glycerol 3-phosphate. The sequence is that of Glycerol kinase from Nocardia farcinica (strain IFM 10152).